We begin with the raw amino-acid sequence, 382 residues long: Galactokinase (382 aa).

34–37 (EHTD) is a binding site for substrate. An ATP-binding site is contributed by 124–130 (GAGLSSS). Mg(2+) contacts are provided by Ser130 and Glu162. Asp174 acts as the Proton acceptor in catalysis. Tyr223 is a binding site for substrate.

Belongs to the GHMP kinase family. GalK subfamily.

The protein localises to the cytoplasm. It carries out the reaction alpha-D-galactose + ATP = alpha-D-galactose 1-phosphate + ADP + H(+). Its pathway is carbohydrate metabolism; galactose metabolism. Functionally, catalyzes the transfer of the gamma-phosphate of ATP to D-galactose to form alpha-D-galactose-1-phosphate (Gal-1-P). The polypeptide is Galactokinase (Salmonella heidelberg (strain SL476)).